The following is a 67-amino-acid chain: Conotoxin TsMMSK-011 (67 aa).

Residues 1 to 20 (MMSKLGVLLTICLLLFPLTA) form the signal peptide. The propeptide occupies 21-50 (VQLDGDQPADLPALRTQDIATDHSPWFDPV). Intrachain disulfides connect C53–C65, C54–C61, and C58–C64. A 4-hydroxyproline modification is found at P63.

It belongs to the conotoxin M superfamily. In terms of tissue distribution, expressed by the venom duct.

Its subcellular location is the secreted. The sequence is that of Conotoxin TsMMSK-011 from Conus tessulatus (Tessellate cone).